Reading from the N-terminus, the 445-residue chain is Phosphoglucosamine mutase (445 aa).

Residue Ser102 is the Phosphoserine intermediate of the active site. Mg(2+) is bound by residues Ser102, Asp241, Asp243, and Asp245. A Phosphoserine modification is found at Ser102.

Belongs to the phosphohexose mutase family. Mg(2+) serves as cofactor. Activated by phosphorylation.

The catalysed reaction is alpha-D-glucosamine 1-phosphate = D-glucosamine 6-phosphate. Its function is as follows. Catalyzes the conversion of glucosamine-6-phosphate to glucosamine-1-phosphate. The sequence is that of Phosphoglucosamine mutase from Enterobacter sp. (strain 638).